The following is a 314-amino-acid chain: Taste receptor type 2 member 42 (314 aa).

Over 1 to 7 (MPTELDK) the chain is Extracellular. A helical membrane pass occupies residues 8 to 28 (IFLILAIVEFIIGLLGNVFIG). Residues 29–50 (LVNCSEGIKNQKVFSADFILTC) lie on the Cytoplasmic side of the membrane. Residues 51–71 (LAISTIGQLLVILFDSFLVGL) form a helical membrane-spanning segment. Residues 72–101 (ASHLYTTYRLGKLVILLWHMTNHLTTWLAT) are Extracellular-facing. Residues 102 to 122 (CLSIFYFFKIAHFPHSLFLWL) traverse the membrane as a helical segment. The Cytoplasmic segment spans residues 123–127 (RWRMN). The chain crosses the membrane as a helical span at residues 128 to 148 (GMIVMLRTLSLFLLIFDSLVL). Topologically, residues 149-187 (KLFIDISLNIIDKSNLTLYFDESKTLYDKLSILKTLLSL) are extracellular. Asn-163 carries an N-linked (GlcNAc...) asparagine glycan. A helical transmembrane segment spans residues 188–208 (TSFIPFSLSLTSLLFLFLSLV). The Cytoplasmic segment spans residues 209–238 (RHTRNLKLSSLGSRDSSTEAHRRAMKMVMS). Residues 239–259 (FLFLFIVHFFSLQVANWIFFM) traverse the membrane as a helical segment. The Extracellular segment spans residues 260 to 265 (SWNNKY). Residues 266-286 (IKFVMLALNAFPSCHSFILIL) form a helical membrane-spanning segment. Over 287-314 (GNSKLRQTAVRLLSHLRNYTKTSNPLPL) the chain is Cytoplasmic.

Belongs to the G-protein coupled receptor T2R family.

The protein resides in the membrane. Functionally, receptor that may play a role in the perception of bitterness and is gustducin-linked. May play a role in sensing the chemical composition of the gastrointestinal content. The activity of this receptor may stimulate alpha gustducin, mediate PLC-beta-2 activation and lead to the gating of TRPM5. This Pongo pygmaeus (Bornean orangutan) protein is Taste receptor type 2 member 42 (TAS2R42).